A 181-amino-acid chain; its full sequence is Adenylate kinase (181 aa).

ATP is bound at residue 10-15 (GAGKGT). The tract at residues 30-59 (STGELFRSNIENGTKLGLEAKRYLDAGDLV) is NMP. AMP-binding positions include T31, R36, 57–59 (DLV), 85–88 (GFPR), and Q92. Positions 126–132 (ARGRADD) are LID. R127 contacts ATP. Residues R129 and R140 each coordinate AMP. Position 166 (G166) interacts with ATP.

The protein belongs to the adenylate kinase family. As to quaternary structure, monomer.

The protein resides in the cytoplasm. The catalysed reaction is AMP + ATP = 2 ADP. It participates in purine metabolism; AMP biosynthesis via salvage pathway; AMP from ADP: step 1/1. Its function is as follows. Catalyzes the reversible transfer of the terminal phosphate group between ATP and AMP. Plays an important role in cellular energy homeostasis and in adenine nucleotide metabolism. This is Adenylate kinase from Mycolicibacterium paratuberculosis (strain ATCC BAA-968 / K-10) (Mycobacterium paratuberculosis).